The following is a 302-amino-acid chain: Nucleotide-binding protein Strop_3101 (302 aa).

26-33 (GVSGGGRS) is a binding site for ATP. 77-80 (DVRS) is a binding site for GTP.

This sequence belongs to the RapZ-like family.

In terms of biological role, displays ATPase and GTPase activities. The protein is Nucleotide-binding protein Strop_3101 of Salinispora tropica (strain ATCC BAA-916 / DSM 44818 / JCM 13857 / NBRC 105044 / CNB-440).